The primary structure comprises 670 residues: DNA ligase (670 aa).

NAD(+) contacts are provided by residues D32–D36, S81–L82, and E114. K116 serves as the catalytic N6-AMP-lysine intermediate. Residues R137, E174, K291, and K315 each contribute to the NAD(+) site. The Zn(2+) site is built by C409, C412, C427, and C433. Residues A592 to R670 form the BRCT domain.

It belongs to the NAD-dependent DNA ligase family. LigA subfamily. Mg(2+) serves as cofactor. It depends on Mn(2+) as a cofactor.

It carries out the reaction NAD(+) + (deoxyribonucleotide)n-3'-hydroxyl + 5'-phospho-(deoxyribonucleotide)m = (deoxyribonucleotide)n+m + AMP + beta-nicotinamide D-nucleotide.. Functionally, DNA ligase that catalyzes the formation of phosphodiester linkages between 5'-phosphoryl and 3'-hydroxyl groups in double-stranded DNA using NAD as a coenzyme and as the energy source for the reaction. It is essential for DNA replication and repair of damaged DNA. The protein is DNA ligase of Haemophilus influenzae (strain 86-028NP).